A 260-amino-acid chain; its full sequence is Small ribosomal subunit protein uS2 (260 aa).

The interval Glu223–Glu260 is disordered. The span at Val241 to Glu254 shows a compositional bias: basic and acidic residues.

Belongs to the universal ribosomal protein uS2 family.

This chain is Small ribosomal subunit protein uS2, found in Pediococcus pentosaceus (strain ATCC 25745 / CCUG 21536 / LMG 10740 / 183-1w).